The chain runs to 301 residues: 3-methyl-2-oxobutanoate hydroxymethyltransferase (301 aa).

Residues 1–28 (MATSNSSDSSMSAEVPAPYGNGPANAPA) are compositionally biased toward low complexity. The segment at 1–37 (MATSNSSDSSMSAEVPAPYGNGPANAPATPSDTAKKP) is disordered. Asp82 and Asp121 together coordinate Mg(2+). Residues 82–83 (DS), Asp121, and Lys151 contribute to the 3-methyl-2-oxobutanoate site. A Mg(2+)-binding site is contributed by Glu153. Glu219 functions as the Proton acceptor in the catalytic mechanism.

This sequence belongs to the PanB family. In terms of assembly, homodecamer; pentamer of dimers. Mg(2+) serves as cofactor.

It localises to the cytoplasm. It catalyses the reaction 3-methyl-2-oxobutanoate + (6R)-5,10-methylene-5,6,7,8-tetrahydrofolate + H2O = 2-dehydropantoate + (6S)-5,6,7,8-tetrahydrofolate. The protein operates within cofactor biosynthesis; (R)-pantothenate biosynthesis; (R)-pantoate from 3-methyl-2-oxobutanoate: step 1/2. Functionally, catalyzes the reversible reaction in which hydroxymethyl group from 5,10-methylenetetrahydrofolate is transferred onto alpha-ketoisovalerate to form ketopantoate. The chain is 3-methyl-2-oxobutanoate hydroxymethyltransferase from Arthrobacter sp. (strain FB24).